Consider the following 270-residue polypeptide: Putative pyruvate, phosphate dikinase regulatory protein 2 (270 aa).

Residue 151-158 (GVSRTSKT) coordinates ADP.

Belongs to the pyruvate, phosphate/water dikinase regulatory protein family. PDRP subfamily.

It catalyses the reaction N(tele)-phospho-L-histidyl/L-threonyl-[pyruvate, phosphate dikinase] + ADP = N(tele)-phospho-L-histidyl/O-phospho-L-threonyl-[pyruvate, phosphate dikinase] + AMP + H(+). The enzyme catalyses N(tele)-phospho-L-histidyl/O-phospho-L-threonyl-[pyruvate, phosphate dikinase] + phosphate + H(+) = N(tele)-phospho-L-histidyl/L-threonyl-[pyruvate, phosphate dikinase] + diphosphate. In terms of biological role, bifunctional serine/threonine kinase and phosphorylase involved in the regulation of the pyruvate, phosphate dikinase (PPDK) by catalyzing its phosphorylation/dephosphorylation. This chain is Putative pyruvate, phosphate dikinase regulatory protein 2, found in Listeria monocytogenes serovar 1/2a (strain ATCC BAA-679 / EGD-e).